The sequence spans 210 residues: Ras-related protein Rab-43 (210 aa).

23–30 (GDASVGKT) provides a ligand contact to GTP. An Effector region motif is present at residues 45 to 53 (QGSTIGVDF). Serine 47 bears the Phosphoserine mark. 71-75 (DTAGQ) contacts GTP. Threonine 80 carries the phosphothreonine modification. GTP-binding positions include 129–132 (NKSD) and 161–162 (AK). 2 S-geranylgeranyl cysteine lipidation sites follow: cysteine 208 and cysteine 210. The residue at position 210 (cysteine 210) is a Cysteine methyl ester.

It belongs to the small GTPase superfamily. Rab family. Interacts with GDI1, GDI2 and CHM; phosphorylation at Thr-80 disrupts these interactions.

The protein localises to the cytoplasmic vesicle. The protein resides in the phagosome. It is found in the phagosome membrane. Its subcellular location is the golgi apparatus. It localises to the trans-Golgi network membrane. The protein localises to the trans-Golgi network. In terms of biological role, the small GTPases Rab are key regulators of intracellular membrane trafficking, from the formation of transport vesicles to their fusion with membranes. Rabs cycle between an inactive GDP-bound form and an active GTP-bound form that is able to recruit to membranes different set of downstream effectors directly responsible for vesicle formation, movement, tethering and fusion. The low intrinsic GTPase activity of RAB43 is activated by USP6NL. Involved in retrograde transport from the endocytic pathway to the Golgi apparatus. Involved in the transport of Shiga toxin from early and recycling endosomes to the trans-Golgi network. Required for the structural integrity of the Golgi complex. Plays a role in the maturation of phagosomes that engulf pathogens, such as S.aureus and Mycobacterium. In Rattus norvegicus (Rat), this protein is Ras-related protein Rab-43 (Rab43).